Reading from the N-terminus, the 201-residue chain is UPF0301 protein RER_60040 (201 aa).

The protein belongs to the UPF0301 (AlgH) family.

The chain is UPF0301 protein RER_60040 from Rhodococcus erythropolis (strain PR4 / NBRC 100887).